A 968-amino-acid chain; its full sequence is RNA polymerase-associated protein RapA (968 aa).

Residues 164–334 enclose the Helicase ATP-binding domain; sequence DVGRRHAPRV…FARLRLLDPN (171 aa). Residue 177-184 participates in ATP binding; sequence DEVGLGKT. The short motif at 280–283 is the DEAH box element; it reads DEAH. The Helicase C-terminal domain maps to 490–662; it reads RVEWLMGYLT…YLASPDQTEG (173 aa).

The protein belongs to the SNF2/RAD54 helicase family. RapA subfamily. As to quaternary structure, interacts with the RNAP. Has a higher affinity for the core RNAP than for the holoenzyme. Its ATPase activity is stimulated by binding to RNAP.

Functionally, transcription regulator that activates transcription by stimulating RNA polymerase (RNAP) recycling in case of stress conditions such as supercoiled DNA or high salt concentrations. Probably acts by releasing the RNAP, when it is trapped or immobilized on tightly supercoiled DNA. Does not activate transcription on linear DNA. Probably not involved in DNA repair. The chain is RNA polymerase-associated protein RapA from Escherichia coli O1:K1 / APEC.